The following is a 387-amino-acid chain: Exodeoxyribonuclease 7 large subunit (387 aa).

It belongs to the XseA family. In terms of assembly, heterooligomer composed of large and small subunits.

The protein resides in the cytoplasm. It carries out the reaction Exonucleolytic cleavage in either 5'- to 3'- or 3'- to 5'-direction to yield nucleoside 5'-phosphates.. In terms of biological role, bidirectionally degrades single-stranded DNA into large acid-insoluble oligonucleotides, which are then degraded further into small acid-soluble oligonucleotides. The protein is Exodeoxyribonuclease 7 large subunit of Campylobacter jejuni subsp. jejuni serotype O:23/36 (strain 81-176).